Here is a 518-residue protein sequence, read N- to C-terminus: Light-independent protochlorophyllide reductase subunit B (518 aa).

D36 lines the [4Fe-4S] cluster pocket. Catalysis depends on D299, which acts as the Proton donor. 434–435 provides a ligand contact to substrate; that stretch reads GM.

Belongs to the ChlB/BchB/BchZ family. In terms of assembly, protochlorophyllide reductase is composed of three subunits; ChlL, ChlN and ChlB. Forms a heterotetramer of two ChlB and two ChlN subunits. [4Fe-4S] cluster is required as a cofactor.

Its subcellular location is the plastid. The protein resides in the chloroplast. The enzyme catalyses chlorophyllide a + oxidized 2[4Fe-4S]-[ferredoxin] + 2 ADP + 2 phosphate = protochlorophyllide a + reduced 2[4Fe-4S]-[ferredoxin] + 2 ATP + 2 H2O. It functions in the pathway porphyrin-containing compound metabolism; chlorophyll biosynthesis (light-independent). In terms of biological role, component of the dark-operative protochlorophyllide reductase (DPOR) that uses Mg-ATP and reduced ferredoxin to reduce ring D of protochlorophyllide (Pchlide) to form chlorophyllide a (Chlide). This reaction is light-independent. The NB-protein (ChlN-ChlB) is the catalytic component of the complex. The protein is Light-independent protochlorophyllide reductase subunit B of Adiantum capillus-veneris (Maidenhair fern).